The primary structure comprises 491 residues: Cytosol aminopeptidase (491 aa).

2 residues coordinate Mn(2+): Lys263 and Asp268. The active site involves Lys275. Mn(2+) contacts are provided by Asp286, Asp345, and Glu347. The active site involves Arg349.

This sequence belongs to the peptidase M17 family. The cofactor is Mn(2+).

The protein localises to the cytoplasm. The enzyme catalyses Release of an N-terminal amino acid, Xaa-|-Yaa-, in which Xaa is preferably Leu, but may be other amino acids including Pro although not Arg or Lys, and Yaa may be Pro. Amino acid amides and methyl esters are also readily hydrolyzed, but rates on arylamides are exceedingly low.. It catalyses the reaction Release of an N-terminal amino acid, preferentially leucine, but not glutamic or aspartic acids.. Its function is as follows. Presumably involved in the processing and regular turnover of intracellular proteins. Catalyzes the removal of unsubstituted N-terminal amino acids from various peptides. The protein is Cytosol aminopeptidase (pepA) of Haemophilus influenzae (strain ATCC 51907 / DSM 11121 / KW20 / Rd).